Reading from the N-terminus, the 420-residue chain is ATP-dependent Clp protease ATP-binding subunit ClpX (420 aa).

In terms of domain architecture, ClpX-type ZB spans 3 to 57 (KKTPGTNGKQKLFCSFCGKEQDAVKRLVAGPGVYICDECISLCNEIIAEDHEHSH). C16, C19, C38, and C41 together coordinate Zn(2+). 122–129 (PTGSGKTL) serves as a coordination point for ATP.

The protein belongs to the ClpX chaperone family. As to quaternary structure, component of the ClpX-ClpP complex. Forms a hexameric ring that, in the presence of ATP, binds to fourteen ClpP subunits assembled into a disk-like structure with a central cavity, resembling the structure of eukaryotic proteasomes.

ATP-dependent specificity component of the Clp protease. It directs the protease to specific substrates. Can perform chaperone functions in the absence of ClpP. This is ATP-dependent Clp protease ATP-binding subunit ClpX from Leptospira borgpetersenii serovar Hardjo-bovis (strain L550).